Here is a 524-residue protein sequence, read N- to C-terminus: MVAKDYPFYLTVKRANCALDVEAASSPAKETEEPSNKRVKPLSRVTSLANLIPPVRATPLKRFSQTLQRSISFRSDSRPDLFSPRPWSRNTPAANTKRRDSKLWSETFDVCVNHMLTSKEIKRQEAIFELSKGEEDLIEDLKLAKKAYHDPMLKLSIMTEQELNQIFGTLDSLIPLHEDLLRRLQEVRKSDGSTEHVGHILVGWLPCLNSYDSYCSNQVAAKALLDHKKQDHRVQDFLQRCLESPFSRKLDLWNFLDIPRSRLVKYPLLLREILRHTPNDHPDQQHLEEAINIIQGIVAEINIKTGESECQYYKERLIYLEGGQRDSLIDNSRVLCCHGELKNNRGVKLHVFLFQEVLVITRAITHNEQLCYQLYRQPIPVMDLVLEDLQDGEVRLGGSIRGAFSNNERIKNFFRVSFKNGSQSQSHSLQANDSFNKQQWLNCIRQAKEKVTCAGKAGVLSSEACFILSPNGSRVSQGETMIEQMDQSDSESDCSMDTSEISIDCERMEQTNPCENEKQIETNV.

The tract at residues 75–98 (SDSRPDLFSPRPWSRNTPAANTKR) is disordered. Residues 121-303 (IKRQEAIFEL…IQGIVAEINI (183 aa)) enclose the DH domain. A PH domain is found at 290–448 (AINIIQGIVA…QWLNCIRQAK (159 aa)).

The protein localises to the cytoplasm. Its function is as follows. Acts as a guanine nucleotide exchange factor (GEF) for RhoA and RhoB GTPases. The polypeptide is Rho guanine nucleotide exchange factor 3 (Arhgef3) (Gallus gallus (Chicken)).